Here is a 452-residue protein sequence, read N- to C-terminus: La-related protein 1B (452 aa).

Residues 1-22 (MATTASSAANSASRFSIDSSIS) are compositionally biased toward low complexity. The disordered stretch occupies residues 1 to 251 (MATTASSAAN…GFSHRNYSGR (251 aa)). Ala-2 carries the post-translational modification N-acetylalanine. Residues 44–68 (LSLSQDDPFSAPSVSPPTGNNSSDY) are compositionally biased toward polar residues. Low complexity-rich tracts occupy residues 99–117 (SWPALSLSARSSSIKSPSL), 136–163 (ATSNTSTNANAGSSVSATSSENSAVNNS), 171–185 (NNNTSSSSTSSNVSN), and 206–223 (SGNFRNSQRNRNSSSYPR). A compositionally biased stretch (basic and acidic residues) spans 225 to 236 (EGLHHGNRRNYE). The segment covering 237-247 (HGNQSGFSHRN) has biased composition (polar residues). One can recognise an HTH La-type RNA-binding domain in the interval 328–417 (RNFDAILYNK…RGDWDKYLLP (90 aa)). The tract at residues 419–452 (EPSRSGPAAGASNNASLVSQIESMTLSERSREGV) is disordered. Low complexity predominate over residues 422-434 (RSGPAAGASNNAS). A compositionally biased stretch (polar residues) spans 435-445 (LVSQIESMTLS).

The protein belongs to the LARP family.

The protein resides in the cytoplasm. In terms of biological role, promotes leaf senescence. This Arabidopsis thaliana (Mouse-ear cress) protein is La-related protein 1B (LARP1B).